Reading from the N-terminus, the 536-residue chain is Lysosomal acid glucosylceramidase (536 aa).

A signal peptide spans 1 to 39; the sequence is MELSSPSREECPRPQGRVGIMAASLMGLLLLQAASWASG. Cystine bridges form between Cys43/Cys55 and Cys57/Cys62. N-linked (GlcNAc...) asparagine glycosylation is found at Asn58, Asn98, and Asn185. Glu274 serves as the catalytic Proton donor. Asn309 is a glycosylation site (N-linked (GlcNAc...) asparagine). Glu379 (nucleophile) is an active-site residue. Residue Asn501 is glycosylated (N-linked (GlcNAc...) asparagine).

Belongs to the glycosyl hydrolase 30 family. Interacts with saposin-C. Interacts with SCARB2. Interacts with TCP1. Interacts with GRN; this interaction prevents aggregation of GBA1-SCARB2 complex via interaction with HSPA1A upon stress.

It is found in the lysosome membrane. The catalysed reaction is a beta-D-glucosyl-(1&lt;-&gt;1')-N-acylsphing-4-enine + H2O = an N-acylsphing-4-enine + D-glucose. It catalyses the reaction a beta-D-galactosyl-(1&lt;-&gt;1')-N-acylsphing-4-enine + H2O = an N-acylsphing-4-enine + D-galactose. It carries out the reaction cholesteryl 3-beta-D-glucoside + H2O = cholesterol + D-glucose. The enzyme catalyses a beta-D-glucosyl-(1&lt;-&gt;1')-N-acylsphing-4-enine + cholesterol = cholesteryl 3-beta-D-glucoside + an N-acylsphing-4-enine. The catalysed reaction is beta-D-glucosyl-N-(9Z-octadecenoyl)-sphing-4E-enine + cholesterol = N-(9Z-octadecenoyl)-sphing-4-enine + cholesteryl 3-beta-D-glucoside. It catalyses the reaction beta-D-glucosyl-N-octanoylsphing-4E-enine + cholesterol = N-octanoylsphing-4-enine + cholesteryl 3-beta-D-glucoside. It carries out the reaction beta-D-glucosyl-N-dodecanoylsphing-4-enine + cholesterol = N-dodecanoylsphing-4-enine + cholesteryl 3-beta-D-glucoside. The enzyme catalyses beta-D-glucosyl-(1&lt;-&gt;1)-N-octadecanoylsphing-4-enine + cholesterol = N-octadecanoylsphing-4-enine + cholesteryl 3-beta-D-glucoside. The catalysed reaction is beta-D-glucosyl-(1&lt;-&gt;1')-N-(15Z-tetracosenoyl)-sphing-4-enine + cholesterol = N-(15Z-tetracosenoyl)-sphing-4-enine + cholesteryl 3-beta-D-glucoside. It catalyses the reaction a beta-D-galactosyl-(1&lt;-&gt;1')-N-acylsphing-4-enine + cholesterol = cholesteryl 3-beta-D-galactoside + an N-acylsphing-4-enine. It carries out the reaction 1-(beta-D-galactosyl)-N-dodecanoylsphing-4-enine + cholesterol = cholesteryl 3-beta-D-galactoside + N-dodecanoylsphing-4-enine. The enzyme catalyses a beta-D-xylosyl-(1&lt;-&gt;1')-N-acylsphing-4-enine + cholesterol = cholesteryl 3-beta-D-xyloside + an N-acylsphing-4-enine. The catalysed reaction is beta-D-xylosyl-(1&lt;-&gt;1')-N-(9Z-octadecenoyl)-sphing-4-enine + cholesterol = cholesteryl 3-beta-D-xyloside + N-(9Z-octadecenoyl)-sphing-4-enine. The protein operates within steroid metabolism; cholesterol metabolism. It participates in sphingolipid metabolism. Its function is as follows. Glucosylceramidase that catalyzes, within the lysosomal compartment, the hydrolysis of glucosylceramides/GlcCers (such as beta-D-glucosyl-(1&lt;-&gt;1')-N-acylsphing-4-enine) into free ceramides (such as N-acylsphing-4-enine) and glucose. Plays a central role in the degradation of complex lipids and the turnover of cellular membranes. Through the production of ceramides, participates in the PKC-activated salvage pathway of ceramide formation. Catalyzes the glucosylation of cholesterol, through a transglucosylation reaction where glucose is transferred from GlcCer to cholesterol. GlcCer containing mono-unsaturated fatty acids (such as beta-D-glucosyl-N-(9Z-octadecenoyl)-sphing-4-enine) are preferred as glucose donors for cholesterol glucosylation when compared with GlcCer containing same chain length of saturated fatty acids (such as beta-D-glucosyl-N-octadecanoyl-sphing-4-enine). Under specific conditions, may alternatively catalyze the reverse reaction, transferring glucose from cholesteryl 3-beta-D-glucoside to ceramide. Can also hydrolyze cholesteryl 3-beta-D-glucoside producing glucose and cholesterol. Catalyzes the hydrolysis of galactosylceramides/GalCers (such as beta-D-galactosyl-(1&lt;-&gt;1')-N-acylsphing-4-enine), as well as the transfer of galactose between GalCers and cholesterol in vitro, but with lower activity than with GlcCers. Contrary to GlcCer and GalCer, xylosylceramide/XylCer (such as beta-D-xyosyl-(1&lt;-&gt;1')-N-acylsphing-4-enine) is not a good substrate for hydrolysis, however it is a good xylose donor for transxylosylation activity to form cholesteryl 3-beta-D-xyloside. This chain is Lysosomal acid glucosylceramidase (GBA1), found in Sus scrofa (Pig).